Here is a 195-residue protein sequence, read N- to C-terminus: dTTP/UTP pyrophosphatase (195 aa).

The active-site Proton acceptor is Asp-73.

It belongs to the Maf family. YhdE subfamily. The cofactor is a divalent metal cation.

It is found in the cytoplasm. The catalysed reaction is dTTP + H2O = dTMP + diphosphate + H(+). The enzyme catalyses UTP + H2O = UMP + diphosphate + H(+). Nucleoside triphosphate pyrophosphatase that hydrolyzes dTTP and UTP. May have a dual role in cell division arrest and in preventing the incorporation of modified nucleotides into cellular nucleic acids. This is dTTP/UTP pyrophosphatase from Deinococcus radiodurans (strain ATCC 13939 / DSM 20539 / JCM 16871 / CCUG 27074 / LMG 4051 / NBRC 15346 / NCIMB 9279 / VKM B-1422 / R1).